The sequence spans 302 residues: Chloramphenicol resistance protein (302 aa).

Its subcellular location is the cell membrane. This protein is thought to be a membrane-associated barrier of drug uptake. This chain is Chloramphenicol resistance protein (cml), found in Escherichia coli.